The following is a 215-amino-acid chain: Translation initiation factor IF-3 (215 aa).

Residues 159–215 (SAEVQQPPKREGRNMIMFLGPRKTPLQKDKPEQATKAERTLPIAKPPGKTAAPAAAN) are disordered. Basic and acidic residues predominate over residues 184-197 (LQKDKPEQATKAER). Low complexity predominate over residues 200 to 215 (PIAKPPGKTAAPAAAN).

This sequence belongs to the IF-3 family. In terms of assembly, monomer.

The protein localises to the cytoplasm. IF-3 binds to the 30S ribosomal subunit and shifts the equilibrium between 70S ribosomes and their 50S and 30S subunits in favor of the free subunits, thus enhancing the availability of 30S subunits on which protein synthesis initiation begins. The protein is Translation initiation factor IF-3 of Synechococcus sp. (strain RCC307).